We begin with the raw amino-acid sequence, 297 residues long: MSLKSYSTPTYWQRVKVACQYLFPQLPITRLAGWLAEQKWGMVTHFIIRIFAKQYNVNLAEAEKTNPADYTTFNEFFLRPLKENARPINQDDQAVCLPADGKISELGQINENRLLQAKGHYFTLETLLANDEEMAESFKNGSFITTYLSPRDYHRVHMPCDATLKKMIYVPGDLFSVNSFLAEHIPNLFARNERVICEFETAFGPMVQILVGATITASISTVWAGIINPPRSKDVVEYNYQTTGETAIHLKKGDEMGAFRLGSTVINLFPQATVELVSHLQAGVETRMGERFAKIIK.

Residues Asp100, His157, and Ser263 each act as charge relay system; for autoendoproteolytic cleavage activity in the active site. The Schiff-base intermediate with substrate; via pyruvic acid; for decarboxylase activity role is filled by Ser263. Pyruvic acid (Ser); by autocatalysis is present on Ser263.

It belongs to the phosphatidylserine decarboxylase family. PSD-B subfamily. Prokaryotic type I sub-subfamily. In terms of assembly, heterodimer of a large membrane-associated beta subunit and a small pyruvoyl-containing alpha subunit. Pyruvate serves as cofactor. In terms of processing, is synthesized initially as an inactive proenzyme. Formation of the active enzyme involves a self-maturation process in which the active site pyruvoyl group is generated from an internal serine residue via an autocatalytic post-translational modification. Two non-identical subunits are generated from the proenzyme in this reaction, and the pyruvate is formed at the N-terminus of the alpha chain, which is derived from the carboxyl end of the proenzyme. The autoendoproteolytic cleavage occurs by a canonical serine protease mechanism, in which the side chain hydroxyl group of the serine supplies its oxygen atom to form the C-terminus of the beta chain, while the remainder of the serine residue undergoes an oxidative deamination to produce ammonia and the pyruvoyl prosthetic group on the alpha chain. During this reaction, the Ser that is part of the protease active site of the proenzyme becomes the pyruvoyl prosthetic group, which constitutes an essential element of the active site of the mature decarboxylase.

It is found in the cell membrane. The enzyme catalyses a 1,2-diacyl-sn-glycero-3-phospho-L-serine + H(+) = a 1,2-diacyl-sn-glycero-3-phosphoethanolamine + CO2. The protein operates within phospholipid metabolism; phosphatidylethanolamine biosynthesis; phosphatidylethanolamine from CDP-diacylglycerol: step 2/2. Catalyzes the formation of phosphatidylethanolamine (PtdEtn) from phosphatidylserine (PtdSer). The sequence is that of Phosphatidylserine decarboxylase proenzyme from Haemophilus ducreyi (strain 35000HP / ATCC 700724).